We begin with the raw amino-acid sequence, 251 residues long: tRNA (guanine-N(7)-)-methyltransferase (251 aa).

4 residues coordinate S-adenosyl-L-methionine: Glu-69, Glu-94, Asp-121, and Asp-143. The active site involves Asp-143. Positions 147 and 179 each coordinate substrate.

Belongs to the class I-like SAM-binding methyltransferase superfamily. TrmB family.

It catalyses the reaction guanosine(46) in tRNA + S-adenosyl-L-methionine = N(7)-methylguanosine(46) in tRNA + S-adenosyl-L-homocysteine. It functions in the pathway tRNA modification; N(7)-methylguanine-tRNA biosynthesis. In terms of biological role, catalyzes the formation of N(7)-methylguanine at position 46 (m7G46) in tRNA. The chain is tRNA (guanine-N(7)-)-methyltransferase from Rhodopseudomonas palustris (strain BisB18).